The following is a 469-amino-acid chain: 3-isopropylmalate dehydratase large subunit (469 aa).

Cys350, Cys410, and Cys413 together coordinate [4Fe-4S] cluster.

It belongs to the aconitase/IPM isomerase family. LeuC type 1 subfamily. As to quaternary structure, heterodimer of LeuC and LeuD. The cofactor is [4Fe-4S] cluster.

The catalysed reaction is (2R,3S)-3-isopropylmalate = (2S)-2-isopropylmalate. Its pathway is amino-acid biosynthesis; L-leucine biosynthesis; L-leucine from 3-methyl-2-oxobutanoate: step 2/4. Functionally, catalyzes the isomerization between 2-isopropylmalate and 3-isopropylmalate, via the formation of 2-isopropylmaleate. This Brucella abortus (strain S19) protein is 3-isopropylmalate dehydratase large subunit.